The following is a 123-amino-acid chain: MSIETLVEEIGGLTLTDAAALVKALEEKFGVSAAPAMVAGVAAAAPAAAAAEEQTEFDVVLTAAGDSKINVIKVVRAITGLGLKEAKDLVDGAPKAVKEAVSKEDAEKIVKELKDAGASVELK.

It belongs to the bacterial ribosomal protein bL12 family. As to quaternary structure, homodimer. Part of the ribosomal stalk of the 50S ribosomal subunit. Forms a multimeric L10(L12)X complex, where L10 forms an elongated spine to which 2 to 4 L12 dimers bind in a sequential fashion. Binds GTP-bound translation factors.

Forms part of the ribosomal stalk which helps the ribosome interact with GTP-bound translation factors. Is thus essential for accurate translation. The sequence is that of Large ribosomal subunit protein bL12 from Chlorobium phaeovibrioides (strain DSM 265 / 1930) (Prosthecochloris vibrioformis (strain DSM 265)).